Consider the following 225-residue polypeptide: Ribose-5-phosphate isomerase A (225 aa).

Residues 32 to 35, 85 to 88, and 98 to 101 contribute to the substrate site; these read TGST, DGAD, and KGGG. Glutamate 107 acts as the Proton acceptor in catalysis. Lysine 125 contacts substrate.

Belongs to the ribose 5-phosphate isomerase family. Homodimer.

It catalyses the reaction aldehydo-D-ribose 5-phosphate = D-ribulose 5-phosphate. It participates in carbohydrate degradation; pentose phosphate pathway; D-ribose 5-phosphate from D-ribulose 5-phosphate (non-oxidative stage): step 1/1. Catalyzes the reversible conversion of ribose-5-phosphate to ribulose 5-phosphate. The protein is Ribose-5-phosphate isomerase A of Marinobacter nauticus (strain ATCC 700491 / DSM 11845 / VT8) (Marinobacter aquaeolei).